We begin with the raw amino-acid sequence, 128 residues long: Large ribosomal subunit protein bL17 (128 aa).

This sequence belongs to the bacterial ribosomal protein bL17 family. As to quaternary structure, part of the 50S ribosomal subunit. Contacts protein L32.

The chain is Large ribosomal subunit protein bL17 from Edwardsiella ictaluri (strain 93-146).